Reading from the N-terminus, the 309-residue chain is Mitochondrial fission regulator 1-like (309 aa).

Positions D189–V221 are disordered. Over residues V190–S211 the composition is skewed to acidic residues. The residue at position 253 (S253) is a Phosphoserine.

The protein belongs to the MTFR1 family.

It localises to the mitochondrion outer membrane. Its function is as follows. Mitochondrial protein required for adaptation of miochondrial dynamics to metabolic changes. Regulates mitochondrial morphology at steady state and mediates AMPK-dependent stress-induced mitochondrial fragmentation via the control of OPA1 levels. This is Mitochondrial fission regulator 1-like (mtfr1l) from Danio rerio (Zebrafish).